The sequence spans 199 residues: IMP cyclohydrolase (199 aa).

It belongs to the archaeal IMP cyclohydrolase family.

It catalyses the reaction IMP + H2O = 5-formamido-1-(5-phospho-D-ribosyl)imidazole-4-carboxamide. It functions in the pathway purine metabolism; IMP biosynthesis via de novo pathway; IMP from 5-formamido-1-(5-phospho-D-ribosyl)imidazole-4-carboxamide: step 1/1. In terms of biological role, catalyzes the cyclization of 5-formylamidoimidazole-4-carboxamide ribonucleotide to IMP. The sequence is that of IMP cyclohydrolase from Methanothrix thermoacetophila (strain DSM 6194 / JCM 14653 / NBRC 101360 / PT) (Methanosaeta thermophila).